The primary structure comprises 282 residues: MQVITSVKEAKQIVKDWKSHQLSIGYVPTMGFLHDGHLSLVKNAKTQDKVIVSIFVNPMQFGPNEDFSSYPRDLERDIKMCQDNGVDMVFIPDAAQMYLKNFSTYVDMNTITDKLCGAKRLGHFRGVCTVLAKFFNILNPDIVYMGQKDAQQCVVVRHMVDDLNFDLKIQICPIIREEDGLAKSSRNVYLSEEERKASLAISQSIFLAEKLVQEGEKDTSKIIQAMKDILEKEKLIKIDYIELVDFNTMENIKNIADNVLGAVAAFVGKTRLIDNFLVQGLK.

Position 30 to 37 (30 to 37 (MGFLHDGH)) interacts with ATP. H37 functions as the Proton donor in the catalytic mechanism. Q60 is a binding site for (R)-pantoate. Position 60 (Q60) interacts with beta-alanine. ATP is bound at residue 146-149 (GQKD). Q152 contributes to the (R)-pantoate binding site. ATP is bound by residues I175 and 183-186 (KSSR).

Belongs to the pantothenate synthetase family. Homodimer.

It is found in the cytoplasm. The enzyme catalyses (R)-pantoate + beta-alanine + ATP = (R)-pantothenate + AMP + diphosphate + H(+). It functions in the pathway cofactor biosynthesis; (R)-pantothenate biosynthesis; (R)-pantothenate from (R)-pantoate and beta-alanine: step 1/1. Its function is as follows. Catalyzes the condensation of pantoate with beta-alanine in an ATP-dependent reaction via a pantoyl-adenylate intermediate. This is Pantothenate synthetase from Campylobacter jejuni subsp. jejuni serotype O:23/36 (strain 81-176).